Consider the following 184-residue polypeptide: UPF0149 protein PSPTO_5224 (184 aa).

It belongs to the UPF0149 family.

In Pseudomonas syringae pv. tomato (strain ATCC BAA-871 / DC3000), this protein is UPF0149 protein PSPTO_5224.